The sequence spans 122 residues: Phospholipase A2 crotoxin basic chain (122 aa).

7 cysteine pairs are disulfide-bonded: C26–C115, C28–C44, C43–C95, C49–C122, C50–C88, C57–C81, and C75–C86. Y27, G29, and G31 together coordinate Ca(2+). H47 is a catalytic residue. D48 contacts Ca(2+). D89 is a catalytic residue.

In terms of assembly, heterodimer of one acidic (CA also named crotapotin) and one basic (CB) subunits; non-covalently linked. Ca(2+) is required as a cofactor. Expressed by the venom gland.

Its subcellular location is the secreted. The catalysed reaction is a 1,2-diacyl-sn-glycero-3-phosphocholine + H2O = a 1-acyl-sn-glycero-3-phosphocholine + a fatty acid + H(+). Its function is as follows. Heterodimer CA-CB: Crotoxin is a potent presynaptic neurotoxin that possesses phospholipase A2 (PLA2) activity and exerts a lethal action by blocking neuromuscular transmission. It consists of a non-covalent association of a basic and weakly toxic PLA2 subunit (CB), with a small acidic, non-enzymatic and non-toxic subunit (CA also named crotapotin). The complex acts by binding to a specific 48-kDa protein (R48) receptor located on presynaptic membranes, forming a transient ternary complex CA-CB-R48, followed by dissociation of the CA-CB complex and release of the CA subunit. At equilibrium, only the CB subunits remain associated with the specific crotoxin receptor. In addition to neurotoxicity, crotoxin has been found to exert nephrotoxicity, and cardiovascular toxicity. Moreover, anti-inflammatory, immunomodulatory, anti-tumor and analgesic effects of crotoxin have also been reported. Monomer CB: The basic subunit of crotoxin is a snake venom phospholipase A2 (PLA2) that exhibits weak neurotoxicity and strong anticoagulant effects by binding to factor Xa (F10) and inhibiting the prothrombinase activity. In addition, it exerts myotoxicity, nephrotoxicity, and cardiovascular toxicity as well as anti-inflammatory, immunomodulatory, anti-tumor and analgesic effects. Also shows a strong antimicrobial activity against X.axonopodis passiforae (Gram-negative) which is completely dependent on the enzymatic activity. PLA2 catalyzes the calcium-dependent hydrolysis of the 2- acyl groups in 3-sn-phosphoglycerides. The protein is Phospholipase A2 crotoxin basic chain of Crotalus durissus collilineatus (Brazilian rattlesnake).